Here is a 305-residue protein sequence, read N- to C-terminus: DNA-directed RNA polymerase 35 kDa subunit (305 aa).

Belongs to the poxviridae DNA-directed RNA polymerase 35 kDa subunit family. As to quaternary structure, the DNA-dependent RNA polymerase used for intermediate and late genes expression consists of eight subunits 147 kDa, 133 kDa, 35 kDa, 30 kDa, 22 kDa, 19 kDa, 18 kDa and 7 kDa totalling more than 500 kDa in mass. The same holoenzyme, with the addition of the transcription-specificity factor RAP94, is used for early gene expression.

It localises to the virion. The catalysed reaction is RNA(n) + a ribonucleoside 5'-triphosphate = RNA(n+1) + diphosphate. In terms of biological role, part of the DNA-dependent RNA polymerase which catalyzes the transcription of viral DNA into RNA using the four ribonucleoside triphosphates as substrates. Responsible for the transcription of early, intermediate and late genes. DNA-dependent RNA polymerase associates with the early transcription factor (ETF), itself composed of D6 and A7, thereby allowing the early genes transcription. Late transcription, and probably also intermediate transcription, require newly synthesized RNA polymerase. The polypeptide is DNA-directed RNA polymerase 35 kDa subunit (RPO35) (Homo sapiens (Human)).